The chain runs to 365 residues: Snurportin-1 (365 aa).

Positions 10–72 constitute an IBB domain; sequence GGVALAAPNS…RLAEGDWAGV (63 aa). 2 disordered regions span residues 15-34 and 69-90; these read AAPN…KGRG and WAGV…EMEV. The segment covering 73–90 has biased composition (acidic residues); the sequence is ESDEDGGEDGDGEEEMEV. The interaction with m3G-cap structure stretch occupies residues 129–131; sequence GKR. The interval 211-333 is necessary for binding to the m3G-cap structure; it reads LSSKIQEEEG…GKAQPSAEAA (123 aa). The disordered stretch occupies residues 317-365; that stretch reads RSKKLAAGKAQPSAEAAARNGHYELEHLSTPQPANSAQGQEEAGSQMEN. The segment covering 345 to 355 has biased composition (polar residues); it reads STPQPANSAQG.

This sequence belongs to the snurportin family.

Its subcellular location is the nucleus. The protein localises to the cytoplasm. In terms of biological role, functions as an U snRNP-specific nuclear import adapter. Involved in the trimethylguanosine (m3G)-cap-dependent nuclear import of U snRNPs. Binds specifically to the terminal m3G-cap U snRNAs. This chain is Snurportin-1 (SNUPN), found in Gallus gallus (Chicken).